The primary structure comprises 252 residues: Lipoprotein PrgK (252 aa).

Positions 1–17 (MIRRYLYTFLLVMTLAG) are cleaved as a signal peptide. Residue Cys18 is the site of N-palmitoyl cysteine attachment. Cys18 is lipidated: S-diacylglycerol cysteine. Residues 207–227 (FATSWIVLIILLSVMSAGFGV) traverse the membrane as a helical segment.

Belongs to the YscJ lipoprotein family.

The protein resides in the cell outer membrane. Required for invasion of epithelial cells. Could be involved in protein secretion. The protein is Lipoprotein PrgK (prgK) of Salmonella typhimurium (strain LT2 / SGSC1412 / ATCC 700720).